The primary structure comprises 811 residues: Probable inorganic carbon transporter subunit DabA (811 aa).

Cys336, Asp338, His498, and Cys513 together coordinate Zn(2+).

The protein belongs to the inorganic carbon transporter (TC 9.A.2) DabA family. In terms of assembly, forms a complex with DabB. It depends on Zn(2+) as a cofactor.

It is found in the cell inner membrane. In terms of biological role, part of an energy-coupled inorganic carbon pump. This is Probable inorganic carbon transporter subunit DabA from Azorhizobium caulinodans (strain ATCC 43989 / DSM 5975 / JCM 20966 / LMG 6465 / NBRC 14845 / NCIMB 13405 / ORS 571).